The primary structure comprises 107 residues: U1-lycotoxin-Ls1x (107 aa).

Residues 1 to 20 (MMKVLVVVALLVTLISYSSS) form the signal peptide. Residues 21–41 (EGIDDLEADELLSLMANEHPR) constitute a propeptide that is removed on maturation. 4 cysteine pairs are disulfide-bonded: C44/C59, C51/C68, C58/C86, and C70/C84.

Belongs to the neurotoxin 19 (CSTX) family. 04 (U1-Lctx) subfamily. In terms of tissue distribution, expressed by the venom gland.

The protein resides in the secreted. This is U1-lycotoxin-Ls1x from Lycosa singoriensis (Wolf spider).